Consider the following 424-residue polypeptide: UDP-N-acetylglucosamine 1-carboxyvinyltransferase (424 aa).

Phosphoenolpyruvate is bound at residue 22-23 (KN). UDP-N-acetyl-alpha-D-glucosamine is bound at residue R96. The active-site Proton donor is C120. Position 120 is a 2-(S-cysteinyl)pyruvic acid O-phosphothioketal (C120). UDP-N-acetyl-alpha-D-glucosamine-binding positions include 125–129 (RPVDQ), D312, and I334.

The protein belongs to the EPSP synthase family. MurA subfamily.

It is found in the cytoplasm. It carries out the reaction phosphoenolpyruvate + UDP-N-acetyl-alpha-D-glucosamine = UDP-N-acetyl-3-O-(1-carboxyvinyl)-alpha-D-glucosamine + phosphate. It participates in cell wall biogenesis; peptidoglycan biosynthesis. In terms of biological role, cell wall formation. Adds enolpyruvyl to UDP-N-acetylglucosamine. This is UDP-N-acetylglucosamine 1-carboxyvinyltransferase from Polynucleobacter asymbioticus (strain DSM 18221 / CIP 109841 / QLW-P1DMWA-1) (Polynucleobacter necessarius subsp. asymbioticus).